The primary structure comprises 335 residues: Arylacetonitrilase (335 aa).

The region spanning 6 to 291 is the CN hydrolase domain; it reads LKVAITQAQP…EGIVYADLDM (286 aa). Glutamate 46 acts as the Proton acceptor in catalysis. Residue lysine 127 is part of the active site. Cysteine 168 serves as the catalytic Nucleophile.

This sequence belongs to the carbon-nitrogen hydrolase superfamily. Nitrilase family.

The enzyme catalyses a nitrile + 2 H2O = a carboxylate + NH4(+). It catalyses the reaction 4-chlorophenylacetonitrile + 2 H2O = 4-chlorophenylacetate + NH4(+). Its function is as follows. Nitrilase that hydrolyzes preferentially phenylacetonitrile, (R,S)-mandelonitrile, and 3-indolylacetonitrile. The polypeptide is Arylacetonitrilase (Arthroderma benhamiae (strain ATCC MYA-4681 / CBS 112371) (Trichophyton mentagrophytes)).